We begin with the raw amino-acid sequence, 138 residues long: MSQTVLAFDFGTNSIGCAVGQSITGTAQGLPAFKAQDGIPNWEQIGKVIAQWQPDLLVVGLPLNMDGTEQPLTQRAKKFANRLNGRFNLPVELQDERLTTVEAKSEIFARGGFKALKKGKVDAISACLILESWFEQQS.

This sequence belongs to the YqgF nuclease family.

Its subcellular location is the cytoplasm. In terms of biological role, could be a nuclease involved in processing of the 5'-end of pre-16S rRNA. The polypeptide is Putative pre-16S rRNA nuclease (Glaesserella parasuis serovar 5 (strain SH0165) (Haemophilus parasuis)).